The sequence spans 288 residues: Pyridoxal kinase PdxY (288 aa).

Substrate is bound by residues serine 12 and 47–48 (TQ). ATP contacts are provided by residues aspartate 114, glutamate 151, lysine 184, and 211 to 214 (RPLL). Aspartate 225 is a substrate binding site.

Belongs to the pyridoxine kinase family. PdxY subfamily. In terms of assembly, homodimer. It depends on Mg(2+) as a cofactor.

The catalysed reaction is pyridoxal + ATP = pyridoxal 5'-phosphate + ADP + H(+). It participates in cofactor metabolism; pyridoxal 5'-phosphate salvage; pyridoxal 5'-phosphate from pyridoxal: step 1/1. Functionally, pyridoxal kinase involved in the salvage pathway of pyridoxal 5'-phosphate (PLP). Catalyzes the phosphorylation of pyridoxal to PLP. The chain is Pyridoxal kinase PdxY from Pseudomonas savastanoi pv. phaseolicola (strain 1448A / Race 6) (Pseudomonas syringae pv. phaseolicola (strain 1448A / Race 6)).